The sequence spans 328 residues: Methionyl-tRNA formyltransferase (328 aa).

121–124 contacts (6S)-5,6,7,8-tetrahydrofolate; the sequence is SLLP.

This sequence belongs to the Fmt family.

It carries out the reaction L-methionyl-tRNA(fMet) + (6R)-10-formyltetrahydrofolate = N-formyl-L-methionyl-tRNA(fMet) + (6S)-5,6,7,8-tetrahydrofolate + H(+). Attaches a formyl group to the free amino group of methionyl-tRNA(fMet). The formyl group appears to play a dual role in the initiator identity of N-formylmethionyl-tRNA by promoting its recognition by IF2 and preventing the misappropriation of this tRNA by the elongation apparatus. The sequence is that of Methionyl-tRNA formyltransferase from Paraburkholderia xenovorans (strain LB400).